We begin with the raw amino-acid sequence, 308 residues long: Thymidylate synthase (308 aa).

DUMP-binding positions include Arg-26 and 170 to 171; that span reads RR. Cys-190 serves as the catalytic Nucleophile. Residues 210–213, Asn-221, and 251–253 contribute to the dUMP site; these read RSCD and HVY. Residue Asp-213 coordinates (6R)-5,10-methylene-5,6,7,8-tetrahydrofolate. Ala-307 provides a ligand contact to (6R)-5,10-methylene-5,6,7,8-tetrahydrofolate.

The protein belongs to the thymidylate synthase family. Bacterial-type ThyA subfamily. As to quaternary structure, homodimer.

The protein resides in the cytoplasm. The catalysed reaction is dUMP + (6R)-5,10-methylene-5,6,7,8-tetrahydrofolate = 7,8-dihydrofolate + dTMP. It functions in the pathway pyrimidine metabolism; dTTP biosynthesis. In terms of biological role, catalyzes the reductive methylation of 2'-deoxyuridine-5'-monophosphate (dUMP) to 2'-deoxythymidine-5'-monophosphate (dTMP) while utilizing 5,10-methylenetetrahydrofolate (mTHF) as the methyl donor and reductant in the reaction, yielding dihydrofolate (DHF) as a by-product. This enzymatic reaction provides an intracellular de novo source of dTMP, an essential precursor for DNA biosynthesis. The chain is Thymidylate synthase from Rhizorhabdus wittichii (strain DSM 6014 / CCUG 31198 / JCM 15750 / NBRC 105917 / EY 4224 / RW1) (Sphingomonas wittichii).